The following is an 81-amino-acid chain: Small ribosomal subunit protein eS21 (81 aa).

The protein belongs to the eukaryotic ribosomal protein eS21 family. In terms of assembly, component of the 40S small ribosomal subunit.

The protein resides in the cytoplasm. It localises to the cytosol. It is found in the rough endoplasmic reticulum. Functionally, component of the small ribosomal subunit. The ribosome is a large ribonucleoprotein complex responsible for the synthesis of proteins in the cell. This chain is Small ribosomal subunit protein eS21 (rps21), found in Danio rerio (Zebrafish).